We begin with the raw amino-acid sequence, 513 residues long: Acetylcholine receptor subunit delta (513 aa).

The N-terminal stretch at 1-18 (MAVLLALFGALVLSGGLC) is a signal peptide. Over 19–244 (VNQEERLIHH…ITFYLIIKRK (226 aa)) the chain is Extracellular. N-linked (GlcNAc...) asparagine glycans are attached at residues N88 and N161. A disulfide bond links C148 and C162. The next 3 membrane-spanning stretches (helical) occupy residues 245-269 (PLFY…VFYL), 277-295 (MTLV…LLVS), and 311-332 (YLLF…VLNF). Topologically, residues 333 to 467 (HFRTPSTHVM…WNRVARTLDR (135 aa)) are cytoplasmic. Y388 bears the Phosphotyrosine; by Tyr-kinases mark. A helical membrane pass occupies residues 468–490 (LCLFLITPMLVVGTLWIFLMGIY).

The protein belongs to the ligand-gated ion channel (TC 1.A.9) family. Acetylcholine receptor (TC 1.A.9.1) subfamily. As to quaternary structure, pentamer of two alpha chains, and one each of the beta, delta, and gamma chains.

It is found in the postsynaptic cell membrane. The protein resides in the cell membrane. The catalysed reaction is K(+)(in) = K(+)(out). The enzyme catalyses Na(+)(in) = Na(+)(out). Functionally, after binding acetylcholine, the AChR responds by an extensive change in conformation that affects all subunits and leads to opening of an ion-conducting channel across the plasma membrane. This chain is Acetylcholine receptor subunit delta (CHRND), found in Gallus gallus (Chicken).